We begin with the raw amino-acid sequence, 586 residues long: Ezrin (586 aa).

The region spanning 2 to 296 (PKPINVRVTT…NHELYMRRRK (295 aa)) is the FERM domain. Residue K60 is modified to N6-acetyllysine. Residues 115–120 (IYCPPE) carry the [IL]-x-C-x-x-[DE] motif motif. Y146 bears the Phosphotyrosine; by PDGFR mark. The interval 244-586 (EIRNISFNDK…KQRIDEFEAL (343 aa)) is interaction with SCYL3. Residues 302–462 (VQQMKAQARE…QDDLVKTKEE (161 aa)) are a coiled coil. The disordered stretch occupies residues 306-341 (KAQAREEKHQKQLERQQLETEKKRRETVEREKEQMM). Residues 308 to 341 (QAREEKHQKQLERQQLETEKKRRETVEREKEQMM) are compositionally biased toward basic and acidic residues. Residue Y354 is modified to Phosphotyrosine; by PDGFR. Position 366 is a phosphoserine (S366). At Y478 the chain carries Phosphotyrosine. The tract at residues 485–564 (VQESLQDEGA…NENMRQGRDK (80 aa)) is disordered. Basic and acidic residues predominate over residues 507–528 (GIRDDRNEEKRITEAEKNERVQ). Over residues 530 to 539 (QLLTLSSELS) the composition is skewed to polar residues. A Phosphoserine modification is found at S535. The span at 540 to 564 (QARDENKRTHNDIIHNENMRQGRDK) shows a compositional bias: basic and acidic residues. T567 is modified (phosphothreonine; by ROCK2 and PKC/PRKCI).

As to quaternary structure, monomer. Homodimer. Interacts with PALS1 and NHERF2. Found in a complex with EZR, PODXL and NHERF2. Interacts with MCC, PLEKHG6, PODXL, SCYL3/PACE1, NHERF1 and TMEM8B. Interacts (when phosphorylated) with FES/FPS. Interacts with dimeric S100P, the interaction may be activating through unmasking of F-actin binding sites. Identified in complexes that contain VIM, EZR, AHNAK, BFSP1, BFSP2, ANK2, PLEC, PRX and spectrin. Detected in a complex composed of at least EZR, AHNAK, PPL and PRX. Interacts with PDPN (via cytoplasmic domain); activates RHOA and promotes epithelial-mesenchymal transition. Interacts with SPN/CD43 cytoplasmic tail, CD44 and ICAM2. Interacts with SLC9A3; interaction targets SLC9A3 to the apical membrane. Interacts with SLC9A1; regulates interactions of SLC9A1 with cytoskeletal and promotes stress fiber formation. Interacts with CLIC5; may work together in a complex which also includes RDX and MYO6 to stabilize linkages between the plasma membrane and subjacent actin cytoskeleton at the base of stereocilia. Phosphorylated by tyrosine-protein kinases. Phosphorylation by ROCK2 suppresses the head-to-tail association of the N-terminal and C-terminal halves resulting in an opened conformation which is capable of actin and membrane-binding. In terms of processing, S-nitrosylation is induced by interferon-gamma and oxidatively-modified low-densitity lipoprotein (LDL(ox)) possibly implicating the iNOS-S100A8/9 transnitrosylase complex. Expressed in cerebral cortex, basal ganglia, hippocampus, hypophysis, and optic nerve. Weakly expressed in brain stem and diencephalon. Stronger expression was detected in gray matter of frontal lobe compared to white matter (at protein level). Component of the microvilli of intestinal epithelial cells. Preferentially expressed in astrocytes of hippocampus, frontal cortex, thalamus, parahippocampal cortex, amygdala, insula, and corpus callosum. Not detected in neurons in most tissues studied.

It localises to the apical cell membrane. Its subcellular location is the cell projection. It is found in the microvillus membrane. The protein resides in the ruffle membrane. The protein localises to the cytoplasm. It localises to the cell cortex. Its subcellular location is the cytoskeleton. It is found in the microvillus. A head-to-tail association, of the N-terminal and C-terminal halves results in a closed conformation (inactive form) which is incapable of actin or membrane-binding. In terms of biological role, probably involved in connections of major cytoskeletal structures to the plasma membrane. In epithelial cells, required for the formation of microvilli and membrane ruffles on the apical pole. Along with PLEKHG6, required for normal macropinocytosis. This is Ezrin (EZR) from Homo sapiens (Human).